A 109-amino-acid chain; its full sequence is Phosphoribosyl-AMP cyclohydrolase (109 aa).

D80 lines the Mg(2+) pocket. C81 serves as a coordination point for Zn(2+). Residues D82 and D84 each coordinate Mg(2+). Zn(2+) contacts are provided by C97 and C104.

Belongs to the PRA-CH family. As to quaternary structure, homodimer. Mg(2+) is required as a cofactor. It depends on Zn(2+) as a cofactor.

It is found in the cytoplasm. It catalyses the reaction 1-(5-phospho-beta-D-ribosyl)-5'-AMP + H2O = 1-(5-phospho-beta-D-ribosyl)-5-[(5-phospho-beta-D-ribosylamino)methylideneamino]imidazole-4-carboxamide. Its pathway is amino-acid biosynthesis; L-histidine biosynthesis; L-histidine from 5-phospho-alpha-D-ribose 1-diphosphate: step 3/9. Its function is as follows. Catalyzes the hydrolysis of the adenine ring of phosphoribosyl-AMP. The sequence is that of Phosphoribosyl-AMP cyclohydrolase from Clostridium beijerinckii (strain ATCC 51743 / NCIMB 8052) (Clostridium acetobutylicum).